A 136-amino-acid chain; its full sequence is Small ribosomal subunit protein bS6 (136 aa).

Residues 99–136 (QSEMLKAEENRSERRERRERPEHGGHEGLDGDSDKADE) are disordered. Over residues 103-136 (LKAEENRSERRERRERPEHGGHEGLDGDSDKADE) the composition is skewed to basic and acidic residues.

The protein belongs to the bacterial ribosomal protein bS6 family.

Functionally, binds together with bS18 to 16S ribosomal RNA. The protein is Small ribosomal subunit protein bS6 of Azotobacter vinelandii (strain DJ / ATCC BAA-1303).